The following is a 128-amino-acid chain: Early 3 14.7 kDa protein (128 aa).

Belongs to the adenoviridae E3_15 family. In terms of assembly, may bind to host IKBKG, OPTN and RRAGA.

It localises to the host cytoplasm. Its subcellular location is the host nucleus. Its function is as follows. May prevent Nf-kappaB activation by immune signals like Tumor necrosis factor, presumably by inhibiting NFKB1 dimer DNA-binding. May act directly at the TNF receptor to inhibit signaling. In Human adenovirus C serotype 2 (HAdV-2), this protein is Early 3 14.7 kDa protein.